Here is a 213-residue protein sequence, read N- to C-terminus: FMN-dependent NADH:quinone oxidoreductase (213 aa).

Residue S10 coordinates FMN.

Belongs to the azoreductase type 1 family. Homodimer. It depends on FMN as a cofactor.

It catalyses the reaction 2 a quinone + NADH + H(+) = 2 a 1,4-benzosemiquinone + NAD(+). The catalysed reaction is N,N-dimethyl-1,4-phenylenediamine + anthranilate + 2 NAD(+) = 2-(4-dimethylaminophenyl)diazenylbenzoate + 2 NADH + 2 H(+). Quinone reductase that provides resistance to thiol-specific stress caused by electrophilic quinones. Functionally, also exhibits azoreductase activity. Catalyzes the reductive cleavage of the azo bond in aromatic azo compounds to the corresponding amines. The polypeptide is FMN-dependent NADH:quinone oxidoreductase (Opitutus terrae (strain DSM 11246 / JCM 15787 / PB90-1)).